The chain runs to 230 residues: Cysteine S-methyltransferase OspZ (230 aa).

Residues 49-52 (GITR) form an interaction with host proteins TAB2, TAB3 and ZRANB3 region. S-adenosyl-L-methionine-binding residues include A92, S98, R107, Q111, Y204, and E208.

It belongs to the NleE/OspZ family. As to quaternary structure, monomer.

Its subcellular location is the secreted. It is found in the host cytoplasm. The protein resides in the host nucleus. The catalysed reaction is L-cysteinyl-[protein] + S-adenosyl-L-methionine = S-methyl-L-cysteinyl-[protein] + S-adenosyl-L-homocysteine + H(+). In terms of biological role, cysteine methyltransferase effector that inhibits host cell NF-kappa-B activation by preventing nuclear translocation of host protein RELA/p65. Acts by mediating cysteine methylation of host proteins TAB2 and TAB3: methylation of a conserved cysteine residue of the RanBP2-type zinc finger (NZF) of TAB2 and TAB3 disrupts zinc-binding, thereby inactivating the ubiquitin chain-binding activity of TAB2 and TAB3, leading to NF-kappa-B inactivation. Also mediates cysteine methylation of host protein ZRANB3, inactivating its ability to bind ubiquitin chains. The sequence is that of Cysteine S-methyltransferase OspZ from Shigella flexneri.